The sequence spans 450 residues: MLWKITDNVKYEEDCEDRHDGSSNGNPRVPHLSSAGQHLYSPAPPLSHTGVAEYQPPPYFPPPYQQLAYSQSADPYSHLGEAYAAAINPLHQPAPTGSQQQAWPGRQSQEGAGLPSHHGRPAGLLPHLSGLEAGAVSARRDAYRRSDLLLPHAHALDAAGLAENLGLHDMPHQMDEVQNVDDQHLLLHDQTVIRKGPISMTKNPLNLPCQKELVGAVMNPTEVFCSVPGRLSLLSSTSKYKVTVAEVQRRLSPPECLNASLLGGVLRRAKSKNGGRSLREKLDKIGLNLPAGRRKAAHVTLLTSLVEGEAVHLARDFAYVCEAEFPSKPVAEYLTRPHLGGRNEMAARKNMLLAAQQLCKEFTELLSQDRTPHGTSRLAPVLETNIQNCLSHFSLITHGFGSQAICAAVSALQNYIKEALIVIDKSYMNPGDQSPADSNKTLEKMEKHRK.

Lys10 participates in a covalent cross-link: Glycyl lysine isopeptide (Lys-Gly) (interchain with G-Cter in SUMO). 2 disordered regions span residues 13–63 (EDCE…FPPP) and 90–126 (LHQPAPTGSQQQAWPGRQSQEGAGLPSHHGRPAGLLP). Residues 59-64 (YFPPPY) carry the PPxY motif motif. Residues 95 to 110 (PTGSQQQAWPGRQSQE) show a composition bias toward polar residues. Ser252 is modified (phosphoserine; by PKA). Residues 293 to 424 (RRKAAHVTLL…YIKEALIVID (132 aa)) form an H-S-H (helix-span-helix), dimerization region. Residues 431–450 (GDQSPADSNKTLEKMEKHRK) form a disordered region. The residue at position 434 (Ser434) is a Phosphoserine. A compositionally biased stretch (basic and acidic residues) spans 440 to 450 (KTLEKMEKHRK).

Belongs to the AP-2 family. As to quaternary structure, binds DNA as a dimer. Can form homodimers or heterodimers with other AP-2 family members. Interacts with WWOX. Interacts with UBE2I. Interacts with KCTD1; this interaction represses transcription activation. Interacts with CITED2 (via C-terminus); the interaction stimulates TFAP2B-transcriptional activity. Interacts with CITED4. Interacts with MTA1. Sumoylated on Lys-10; which inhibits transcriptional activity.

Its subcellular location is the nucleus. Sequence-specific DNA-binding transcription factor that interacts with cellular enhancer elements to regulate transcription of selected genes, and which plays a key role in early embryonic development. AP-2 factors bind to the consensus sequence 5'-GCCNNNGGC-3' and activate genes involved in a large spectrum of important biological functions. TFAP2C plays a key role in early embryonic development by regulating both inner cell mass (ICM) and trophectoderm differentiation. At the 8-cell stage, during morula development, controls expression of cell-polarity genes. Upon trophoblast commitment, binds to late trophectoderm genes in blastocysts together with CDX2, and later to extra-embryonic ectoderm genes together with SOX2. Binds to both closed and open chromatin with other transcription factors. Involved in the MTA1-mediated epigenetic regulation of ESR1 expression in breast cancer. The chain is Transcription factor AP-2 gamma (TFAP2C) from Homo sapiens (Human).